The primary structure comprises 691 residues: DNA ligase (691 aa).

Residues aspartate 41–aspartate 45, serine 90–leucine 91, and glutamate 130 each bind NAD(+). The active-site N6-AMP-lysine intermediate is the lysine 132. Positions 153, 190, 307, and 331 each coordinate NAD(+). Zn(2+) is bound by residues cysteine 425, cysteine 428, cysteine 443, and cysteine 449. Residues alanine 610–arginine 691 enclose the BRCT domain.

It belongs to the NAD-dependent DNA ligase family. LigA subfamily. It depends on Mg(2+) as a cofactor. Mn(2+) is required as a cofactor.

It carries out the reaction NAD(+) + (deoxyribonucleotide)n-3'-hydroxyl + 5'-phospho-(deoxyribonucleotide)m = (deoxyribonucleotide)n+m + AMP + beta-nicotinamide D-nucleotide.. DNA ligase that catalyzes the formation of phosphodiester linkages between 5'-phosphoryl and 3'-hydroxyl groups in double-stranded DNA using NAD as a coenzyme and as the energy source for the reaction. It is essential for DNA replication and repair of damaged DNA. The sequence is that of DNA ligase from Burkholderia mallei (strain NCTC 10247).